The following is a 236-amino-acid chain: Urease accessory protein UreG (236 aa).

Residues 1 to 26 (MHDHSLHSGHDHGLGPGSFHDRGAPH) form a disordered region. 42-49 (GPVGSGKT) is a GTP binding site.

It belongs to the SIMIBI class G3E GTPase family. UreG subfamily. Homodimer. UreD, UreF and UreG form a complex that acts as a GTP-hydrolysis-dependent molecular chaperone, activating the urease apoprotein by helping to assemble the nickel containing metallocenter of UreC. The UreE protein probably delivers the nickel.

The protein resides in the cytoplasm. In terms of biological role, facilitates the functional incorporation of the urease nickel metallocenter. This process requires GTP hydrolysis, probably effectuated by UreG. This is Urease accessory protein UreG from Anaeromyxobacter sp. (strain Fw109-5).